The following is a 164-amino-acid chain: MPSNIYHTFEKKSYKIKNKLLGDHKIHNLWVLFKNKKPVAAIVETTAPDGYSGAINMLVAAYFNGEIINARVLSHKETPGIGDKIDLSISNWITRFTGMYVASIEDKDFKLRKYGGKIEQFTGATITPQSVTNSIKRTVVFIKKIPFIFDFLNKGIYEYQKFFK.

T125 carries the FMN phosphoryl threonine modification.

This sequence belongs to the RnfG family. In terms of assembly, the complex is composed of six subunits: RnfA, RnfB, RnfC, RnfD, RnfE and RnfG. It depends on FMN as a cofactor.

Functionally, part of a membrane-bound complex that couples electron transfer with translocation of ions across the membrane. This Buchnera aphidicola subsp. Acyrthosiphon pisum (strain APS) (Acyrthosiphon pisum symbiotic bacterium) protein is Ion-translocating oxidoreductase complex subunit G.